The sequence spans 303 residues: Cell division protein ZipA (303 aa).

The Periplasmic portion of the chain corresponds to 1–6; it reads MMQDLR. A helical membrane pass occupies residues 7 to 27; that stretch reads LILIIVGAIAIIALLLHGLWT. Residues 28–303 are Cytoplasmic-facing; sequence SRKERSSLFR…RIRSTLGVQV (276 aa). Disordered regions lie at residues 39 to 61, 66 to 85, and 124 to 159; these read RPVK…DEAF, KPYA…EPAI, and EQEP…GEKE. Composition is skewed to basic and acidic residues over residues 75-85 and 139-159; these read SHQEYKAEPAI and ESER…GEKE.

This sequence belongs to the ZipA family. Interacts with FtsZ via their C-terminal domains.

The protein resides in the cell inner membrane. Functionally, essential cell division protein that stabilizes the FtsZ protofilaments by cross-linking them and that serves as a cytoplasmic membrane anchor for the Z ring. Also required for the recruitment to the septal ring of downstream cell division proteins. In Photorhabdus laumondii subsp. laumondii (strain DSM 15139 / CIP 105565 / TT01) (Photorhabdus luminescens subsp. laumondii), this protein is Cell division protein ZipA.